The following is a 149-amino-acid chain: UPF0260 protein Pput_1301 (149 aa).

Belongs to the UPF0260 family.

The chain is UPF0260 protein Pput_1301 from Pseudomonas putida (strain ATCC 700007 / DSM 6899 / JCM 31910 / BCRC 17059 / LMG 24140 / F1).